A 211-amino-acid polypeptide reads, in one-letter code: Small ribosomal subunit protein uS3c (211 aa).

In terms of domain architecture, KH type-2 spans 39–109 (IREFAESRLP…NVALYVTKTQ (71 aa)).

The protein belongs to the universal ribosomal protein uS3 family. Part of the 30S ribosomal subunit.

It localises to the plastid. It is found in the chloroplast. The sequence is that of Small ribosomal subunit protein uS3c (rps3) from Ostreococcus tauri.